The primary structure comprises 335 residues: NADH-quinone oxidoreductase subunit H (335 aa).

Transmembrane regions (helical) follow at residues 15–35, 81–101, 114–134, 154–174, 187–207, 238–258, 270–290, and 307–327; these read VVKAIVVLLAVVVCGALLSFV, MIFTLAPVVAMSALLIGFSII, IGLLFFFAMAGLSVYAVLFAG, VSYEVFLGLALMGVVVQVGSF, LWFIIPQFFGFCTFFIAGVAV, FFVGEYIGIILISALLVTLFF, QVPFLWFALKTAFFIMLFILL, and WKFCLPLTLINLLVTAAIVLY.

Belongs to the complex I subunit 1 family. As to quaternary structure, NDH-1 is composed of 13 different subunits. Subunits NuoA, H, J, K, L, M, N constitute the membrane sector of the complex.

It is found in the cell inner membrane. The catalysed reaction is a quinone + NADH + 5 H(+)(in) = a quinol + NAD(+) + 4 H(+)(out). Functionally, NDH-1 shuttles electrons from NADH, via FMN and iron-sulfur (Fe-S) centers, to quinones in the respiratory chain. The immediate electron acceptor for the enzyme in this species is believed to be ubiquinone. Couples the redox reaction to proton translocation (for every two electrons transferred, four hydrogen ions are translocated across the cytoplasmic membrane), and thus conserves the redox energy in a proton gradient. This subunit may bind ubiquinone. In Pseudomonas putida (strain GB-1), this protein is NADH-quinone oxidoreductase subunit H.